The sequence spans 399 residues: MSGNRGVVYLGPGKVEVQNIPYPKMQDPQGRQIDHGVILRVVSTNICGSDQHMVRGRTTAPEGLVLGHEITGEVVEIGRGVETMKIGDLVSVPFNVACGHCRTCKEQHTGVCLTVNPARAGGAYGYVDMGGWVGGQAEYVLVPYADFNLLKLPNREAAMEKIRDLTCLSDILPTGYHGAVTAGVGPGSTVYIAGAGPVGLAAAASARLLGAAVVIVGDVNPTRLAHAKKQGFEIADLSKDTPLHEQIAALLGEPEVDCAVDAVGFEARGHGHSGSQQEAPATVLNSLMGITRVAGKIGIPGLYVTEDPGAVDAAAKHGALSIRFGLGWAKSHSFHTGQTPVMKYNRQLMQAIMWDRIKIADIVGVEVITLDDAPKGYGEFDAGVPKKFVIDPHNLFRAA.

A Zn(2+)-binding site is contributed by Cys-47. NAD(+) contacts are provided by Gly-48, Ser-49, and His-52. The Zn(2+) site is built by His-68, Cys-98, Cys-101, Cys-104, Cys-112, and Asp-170. 8 residues coordinate NAD(+): Val-198, Asp-218, Arg-223, Val-263, Arg-268, Pro-300, Gln-338, and Thr-339.

This sequence belongs to the zinc-containing alcohol dehydrogenase family. As to quaternary structure, homotetramer. Requires Zn(2+) as cofactor.

The enzyme catalyses formaldehyde + NAD(+) + H2O = formate + NADH + 2 H(+). It carries out the reaction acetaldehyde + NAD(+) + H2O = acetate + NADH + 2 H(+). Dehydrogenase that catalyzes the NAD(+)-dependent oxidation of formaldehyde and acetaldehyde. Shows no detectable activity against either aldehydes with longer carbon chains or ethanol. This chain is Glutathione-independent formaldehyde dehydrogenase, found in Pseudomonas aeruginosa (strain LESB58).